The primary structure comprises 484 residues: Arginine ADP-riboxanase OspC3 (484 aa).

His-143, Gln-144, Ser-145, Asn-155, Lys-157, Thr-169, Asn-172, and Thr-173 together coordinate NAD(+). The active site involves Glu-326. 3 ANK repeats span residues 369-398, 413-444, and 451-480; these read MAHQ…FTKQ, NLYD…DVNK, and SGDT…ILGK.

The protein belongs to the OspC family. In terms of assembly, interacts with host calmodulin (CALM1, CALM2 and/or CALM3); specifically interacts with the apo form of calmodulin, preventing calcium-binding.

It localises to the secreted. The protein resides in the host cytoplasm. It catalyses the reaction L-arginyl-[protein] + NAD(+) = ADP-riboxanated L-argininyl-[protein] + nicotinamide + NH4(+) + H(+). Interaction with host calmodulin (CALM1, CALM2 and/or CALM3) is required to mediate arginine ADP-riboxanation of host caspases. Its function is as follows. ADP-riboxanase effector that inhibits host cell pyroptosis. Acts by mediating arginine ADP-riboxanation of host CASP4/CASP11, blocking CASP4/CASP11 autoprocessing. This prevents CASP4 activation and ability to recognize and cleave GSDMD, thereby inhibiting LPS-induced pyroptosis. ADP-riboxanation takes place in two steps: OspC3 first catalyzes ADP-ribosylation of target Arg, and then initiates a deamination to remove one N-omega group. Independently of its ADP-riboxanase activity, acts as an inhibitor of calcium signaling by inhibiting host calmodulin, preventing activation of the JAK-STAT signaling pathway in response to interferon-beta. Mechanistically, acts by binding to the apo form of calmodulin, preventing calcium-binding and ability to activate host CaMK2 (CAMKII), which is required to stimulate the JAK-STAT signaling pathway in response to interferon-beta. This Shigella flexneri protein is Arginine ADP-riboxanase OspC3.